A 760-amino-acid polypeptide reads, in one-letter code: uncharacterized protein (760 aa).

The signal sequence occupies residues 1 to 23; the sequence is MVIKKGFFALSSCTLGLGLILTA. C24 carries N-palmitoyl cysteine lipidation. The S-diacylglycerol cysteine moiety is linked to residue C24. 2 disordered regions span residues 220 to 262 and 443 to 482; these read ANGK…NSDN and YEIKAPTNSQNGNGTLLGSFTKSKSNGKEQSGQDEDNQTS. Composition is skewed to polar residues over residues 222 to 257 and 448 to 472; these read GKTTSTQTSPQPKNAVSSLQLKQAAEGTSTDNSQDA and PTNSQNGNGTLLGSFTKSKSNGKEQ.

Belongs to the MG185/MG260 family.

It localises to the cell membrane. This is an uncharacterized protein from Mycoplasma pneumoniae (strain ATCC 29342 / M129 / Subtype 1) (Mycoplasmoides pneumoniae).